A 431-amino-acid chain; its full sequence is Glucose-1-phosphate adenylyltransferase (431 aa).

Lys39 is a beta-D-fructose 1,6-bisphosphate binding site. The AMP site is built by Arg40, His46, and Arg52. Residues Tyr114, Gly179, 194–195 (EK), and Ser212 each bind alpha-D-glucose 1-phosphate. The AMP site is built by Glu370 and Arg386. Beta-D-fructose 1,6-bisphosphate-binding positions include 419 to 423 (REMLR) and 429 to 431 (QER).

Belongs to the bacterial/plant glucose-1-phosphate adenylyltransferase family. In terms of assembly, homotetramer.

The enzyme catalyses alpha-D-glucose 1-phosphate + ATP + H(+) = ADP-alpha-D-glucose + diphosphate. It participates in glycan biosynthesis; glycogen biosynthesis. Allosterically activated by fructose-1,6-bisphosphate (F16BP) and inhibited by AMP. Its function is as follows. Involved in the biosynthesis of ADP-glucose, a building block required for the elongation reactions to produce glycogen. Catalyzes the reaction between ATP and alpha-D-glucose 1-phosphate (G1P) to produce pyrophosphate and ADP-Glc. In Salmonella typhi, this protein is Glucose-1-phosphate adenylyltransferase.